The primary structure comprises 170 residues: Small ribosomal subunit protein bS16 (170 aa).

The disordered stretch occupies residues 114–170 (EGGPTTEAAKPKKKAATSGAKKAAKAAEPEAAAPEAAEPEAAAPAEGGEQAESSTES). Over residues 142–170 (PEAAAPEAAEPEAAAPAEGGEQAESSTES) the composition is skewed to low complexity.

Belongs to the bacterial ribosomal protein bS16 family.

This is Small ribosomal subunit protein bS16 from Mycobacterium avium (strain 104).